Reading from the N-terminus, the 140-residue chain is ATP synthase epsilon chain (140 aa).

The protein belongs to the ATPase epsilon chain family. In terms of assembly, F-type ATPases have 2 components, CF(1) - the catalytic core - and CF(0) - the membrane proton channel. CF(1) has five subunits: alpha(3), beta(3), gamma(1), delta(1), epsilon(1). CF(0) has three main subunits: a, b and c.

It is found in the cell inner membrane. In terms of biological role, produces ATP from ADP in the presence of a proton gradient across the membrane. The protein is ATP synthase epsilon chain of Xanthomonas axonopodis pv. citri (strain 306).